The following is a 484-amino-acid chain: Cobyric acid synthase (484 aa).

The region spanning 251-438 (ALKIAVPMLP…LHGLFGSDAY (188 aa)) is the GATase cobBQ-type domain. Catalysis depends on C333, which acts as the Nucleophile. Residue H430 is part of the active site.

It belongs to the CobB/CobQ family. CobQ subfamily.

It participates in cofactor biosynthesis; adenosylcobalamin biosynthesis. Functionally, catalyzes amidations at positions B, D, E, and G on adenosylcobyrinic A,C-diamide. NH(2) groups are provided by glutamine, and one molecule of ATP is hydrogenolyzed for each amidation. The polypeptide is Cobyric acid synthase (Rhizobium etli (strain ATCC 51251 / DSM 11541 / JCM 21823 / NBRC 15573 / CFN 42)).